The sequence spans 309 residues: Interferon-inducible double-stranded RNA-dependent protein kinase activator A homolog A (309 aa).

Residues 1-22 are disordered; sequence MSQERFPAAPKMSSEKPTSLDA. DRBM domains lie at 31 to 98, 123 to 191, and 236 to 304; these read TPIQ…ILRG, NPVG…KFKT, and DYVK…YLKI.

This sequence belongs to the PRKRA family. As to quaternary structure, homodimer. Interacts with dicer1 and eif2ak2/pkr. Also able to interact with dsRNA.

Its subcellular location is the cytoplasm. The protein resides in the perinuclear region. The protein localises to the nucleus. Functionally, activates eif2ak2/pkr in the absence of double-stranded RNA (dsRNA), leading to phosphorylation of eif2s1/efi2-alpha and inhibition of translation and induction of apoptosis. Required for siRNA production by dicer1 and for subsequent siRNA-mediated post-transcriptional gene silencing. Does not seem to be required for processing of pre-miRNA to miRNA by dicer1. This is Interferon-inducible double-stranded RNA-dependent protein kinase activator A homolog A (prkra-a) from Xenopus laevis (African clawed frog).